The sequence spans 363 residues: Phosphoserine aminotransferase (363 aa).

R42 contributes to the L-glutamate binding site. Pyridoxal 5'-phosphate is bound by residues 76 to 77 (GR), W102, T156, D175, and Q198. An N6-(pyridoxal phosphate)lysine modification is found at K199. A pyridoxal 5'-phosphate-binding site is contributed by 240–241 (NT).

The protein belongs to the class-V pyridoxal-phosphate-dependent aminotransferase family. SerC subfamily. In terms of assembly, homodimer. The cofactor is pyridoxal 5'-phosphate.

The protein localises to the cytoplasm. It carries out the reaction O-phospho-L-serine + 2-oxoglutarate = 3-phosphooxypyruvate + L-glutamate. The enzyme catalyses 4-(phosphooxy)-L-threonine + 2-oxoglutarate = (R)-3-hydroxy-2-oxo-4-phosphooxybutanoate + L-glutamate. It functions in the pathway amino-acid biosynthesis; L-serine biosynthesis; L-serine from 3-phospho-D-glycerate: step 2/3. Its pathway is cofactor biosynthesis; pyridoxine 5'-phosphate biosynthesis; pyridoxine 5'-phosphate from D-erythrose 4-phosphate: step 3/5. Catalyzes the reversible conversion of 3-phosphohydroxypyruvate to phosphoserine and of 3-hydroxy-2-oxo-4-phosphonooxybutanoate to phosphohydroxythreonine. This Shewanella baltica (strain OS195) protein is Phosphoserine aminotransferase.